Consider the following 83-residue polypeptide: Exodeoxyribonuclease 7 small subunit (83 aa).

The protein belongs to the XseB family. As to quaternary structure, heterooligomer composed of large and small subunits.

Its subcellular location is the cytoplasm. The catalysed reaction is Exonucleolytic cleavage in either 5'- to 3'- or 3'- to 5'-direction to yield nucleoside 5'-phosphates.. Bidirectionally degrades single-stranded DNA into large acid-insoluble oligonucleotides, which are then degraded further into small acid-soluble oligonucleotides. The sequence is that of Exodeoxyribonuclease 7 small subunit from Sinorhizobium medicae (strain WSM419) (Ensifer medicae).